The primary structure comprises 896 residues: Probable sodium/sulfate cotransporter 3 (896 aa).

5 helical membrane-spanning segments follow: residues 1–21 (MAAIGWPGIVAIISVAISFII), 47–69 (IITVAKAAAGYGNTGLLTVIFLY), 106–126 (VMVLSAFLNNTPCVTFMIPIL), 140–160 (LLIPLSYAAVLGGTCTSIGTS), and 186–206 (MFDIAPYGVPYALMGFVFIIL). RCK C-terminal domains are found at residues 212 to 296 (LPGN…EFGL), 319 to 404 (TAFH…FKIN), 408 to 493 (LRFV…FPGL), and 499 to 586 (EQVD…KAFV). A run of 7 helical transmembrane segments spans residues 602–622 (MAIGVLLVVGMVLTQIVGGLK), 626–646 (YIHLWPAAVLTAALMLLTGCM), 654–674 (AIMWDVYLTIAAAFGVSAALE), 685–705 (AIISIGKSIGGDGPALIAIYV), 734–754 (LKIPAVDISVAIMLGASAGFI), 776–796 (FATIGAPFQIWLMVVASFILC), and 804–824 (VWIATWSITAFIVFVPALLTL). The disordered stretch occupies residues 857–881 (RAQSFGGKAMSVGSTESRTDGSSTP). Residues 868–881 (VGSTESRTDGSSTP) show a composition bias toward polar residues.

Belongs to the divalent anion:Na+ symporter (DASS) superfamily. Na+/sulfate symporter (TC 2.A.47.4) family.

The protein localises to the cell membrane. In terms of biological role, na(+)/sulfate cotransporter with a probable low-affinity for sulfate. This chain is Probable sodium/sulfate cotransporter 3 (SLT3), found in Chlamydomonas reinhardtii (Chlamydomonas smithii).